The chain runs to 177 residues: Antigen TpF1 (177 aa).

Belongs to the Dps family. Homodecamer; either linked or stabilized by disulfide bonds.

Functionally, may play an important structural role in the outer membrane. The sequence is that of Antigen TpF1 (tpf1) from Treponema pallidum (strain Nichols).